The sequence spans 413 residues: Sprouty-related, EVH1 domain-containing protein 2 (413 aa).

Residues 5–122 (THPNDDSYIV…RGVRKALEDL (118 aa)) form the WH1 domain. The tract at residues 122-163 (LTEGSTTSSSTLQNEAELGDDDVFTTATDSSSNSSQKKDHST) is disordered. The KBD domain maps to 195 to 248 (FSRNLFPFEDEEIVRINPRERWMITGYEDYRYAAVPDKFIQPEDSDSYVQISKN). An SPR domain is found at 303–411 (RCVYCRDMFN…CGCCGGKHKA (109 aa)).

It localises to the cell membrane. It is found in the cytoplasmic vesicle. Its subcellular location is the secretory vesicle membrane. The protein localises to the cytoplasm. Its function is as follows. Negatively regulates Ras signaling pathways and downstream activation of MAP kinases. This Danio rerio (Zebrafish) protein is Sprouty-related, EVH1 domain-containing protein 2 (spred2).